The sequence spans 382 residues: Alcohol dehydrogenase 4 (382 aa).

This sequence belongs to the iron-containing alcohol dehydrogenase family. In terms of assembly, homodimer. Requires Zn(2+) as cofactor. Fe(2+) serves as cofactor.

Its subcellular location is the mitochondrion. It carries out the reaction a primary alcohol + NAD(+) = an aldehyde + NADH + H(+). The enzyme catalyses a secondary alcohol + NAD(+) = a ketone + NADH + H(+). With respect to regulation, inhibited by EDTA. Reduces acetaldehyde to ethanol during glucose fermentation. Specific for ethanol. Shows drastically reduced activity towards primary alcohols from 4 carbon atoms upward. Isomers of aliphatic alcohol, as well as secondary alcohols and glycerol are not used at all. In Saccharomyces cerevisiae (strain YJM789) (Baker's yeast), this protein is Alcohol dehydrogenase 4 (ADH4).